A 113-amino-acid chain; its full sequence is Class I hydrophobin fvh1 (113 aa).

The first 20 residues, 1–20, serve as a signal peptide directing secretion; sequence MVSFRAFTVAASLFATLAAA. 4 disulfides stabilise this stretch: Cys-34–Cys-94, Cys-41–Cys-88, Cys-42–Cys-75, and Cys-95–Cys-108. The N-linked (GlcNAc...) asparagine glycan is linked to Asn-35. A glycan (N-linked (GlcNAc...) asparagine) is linked at Asn-97.

Belongs to the fungal hydrophobin family. As to quaternary structure, self-assembles to form functional amyloid fibrils called rodlets. Self-assembly into fibrillar rodlets occurs spontaneously at hydrophobic:hydrophilic interfaces and the rodlets further associate laterally to form amphipathic monolayers.

The protein resides in the secreted. Its subcellular location is the cell wall. Its function is as follows. Aerial growth, conidiation, and dispersal of filamentous fungi in the environment rely upon a capability of their secreting small amphipathic proteins called hydrophobins (HPBs) with low sequence identity. Class I can self-assemble into an outermost layer of rodlet bundles on aerial cell surfaces, conferring cellular hydrophobicity that supports fungal growth, development and dispersal; whereas Class II form highly ordered films at water-air interfaces through intermolecular interactions but contribute nothing to the rodlet structure. Fvh1 is a class I hydrophobin involved in fruiting body initiation. The sequence is that of Class I hydrophobin fvh1 from Flammulina velutipes (Agaricus velutipes).